We begin with the raw amino-acid sequence, 110 residues long: Putative membrane protein insertion efficiency factor (110 aa).

This sequence belongs to the UPF0161 family.

The protein resides in the cell inner membrane. Its function is as follows. Could be involved in insertion of integral membrane proteins into the membrane. This is Putative membrane protein insertion efficiency factor from Aliarcobacter butzleri (strain RM4018) (Arcobacter butzleri).